The sequence spans 402 residues: MQSSAVFSASPSLPLLKPGRLSLRHPVTASSNLSVSPPNVVSVPPLPRRSWRLASSDSPLRAWSGLPSVSSPSLDTNRFKTAATAVPEEGEGSGKMTKVLELGLLFAMWYLFNIYFNIYNKQVLKALHAPMTVTLVQFAVGSVLITFMWALNLYKRPKISAAQLAAILPLAVVHTLGNLFTNMSLGKVSVSFTHTIKAMEPFFSVVLSAMFLGEVPTPWVIGSIIPIVGGVALASVTEVSFNWAGFLSAMASNLTNQSRNVLSKKVMVKKDDSLDNITLFSIITLMSLFLMAPVTFFSEGIKFTPSYIQSAGVNVQQIYTKSLIAALCFHAYQQVSYMILARVSPVTHSVGNCVKRVVVIVSSVIFFKTPVSPVNAFGTGIALAGVFLYSRVKRIKPKPKTA.

The N-terminal 82 residues, 1–82 (MQSSAVFSAS…SLDTNRFKTA (82 aa)), are a transit peptide targeting the chloroplast. Over 83 to 98 (ATAVPEEGEGSGKMTK) the chain is Chloroplast intermembrane. A helical membrane pass occupies residues 99–119 (VLELGLLFAMWYLFNIYFNIY). The region spanning 118-236 (IYNKQVLKAL…IVGGVALASV (119 aa)) is the EamA domain. Residues 120–131 (NKQVLKALHAPM) are Lumenal-facing. The helical transmembrane segment at 132–152 (TVTLVQFAVGSVLITFMWALN) threads the bilayer. At 153 to 209 (LYKRPKISAAQLAAILPLAVVHTLGNLFTNMSLGKVSVSFTHTIKAMEPFFSVVLSA) the chain is on the chloroplast intermembrane side. The chain crosses the membrane as a helical span at residues 210–230 (MFLGEVPTPWVIGSIIPIVGG). The Lumenal portion of the chain corresponds to 231 to 278 (VALASVTEVSFNWAGFLSAMASNLTNQSRNVLSKKVMVKKDDSLDNIT). Residues 279–298 (LFSIITLMSLFLMAPVTFFS) traverse the membrane as a helical segment. At 299–374 (EGIKFTPSYI…IFFKTPVSPV (76 aa)) the chain is on the chloroplast intermembrane side. The chain crosses the membrane as a helical span at residues 375–394 (NAFGTGIALAGVFLYSRVKR). The Lumenal segment spans residues 395–402 (IKPKPKTA).

It belongs to the TPT transporter family. TPT (TC 2.A.7.9) subfamily. Homodimer.

It localises to the plastid. The protein localises to the chloroplast membrane. Its function is as follows. Mediates the export of fixed carbons from the chloroplasts into the cytosol in the form of triose phosphates. In Brassica oleracea var. botrytis (Cauliflower), this protein is Triose phosphate/phosphate translocator, non-green plastid, chloroplastic (NGTPT).